The chain runs to 101 residues: uncharacterized protein (101 aa).

A signal peptide spans 1–21; that stretch reads MKLSTCCAALLLALASPAVLA. Residues 79 to 94 are compositionally biased toward polar residues; it reads RTTSGNVSAPAQSSQD. Residues 79–101 form a disordered region; that stretch reads RTTSGNVSAPAQSSQDGAPAEPQ.

This is an uncharacterized protein from Escherichia coli (strain K12).